The primary structure comprises 444 residues: Proline--tRNA ligase (444 aa).

Belongs to the class-II aminoacyl-tRNA synthetase family. ProS type 2 subfamily. Homodimer.

The protein resides in the cytoplasm. The catalysed reaction is tRNA(Pro) + L-proline + ATP = L-prolyl-tRNA(Pro) + AMP + diphosphate. Catalyzes the attachment of proline to tRNA(Pro) in a two-step reaction: proline is first activated by ATP to form Pro-AMP and then transferred to the acceptor end of tRNA(Pro). This chain is Proline--tRNA ligase, found in Maricaulis maris (strain MCS10) (Caulobacter maris).